Here is a 149-residue protein sequence, read N- to C-terminus: Cell division protein SepF (149 aa).

Residues S12 to L57 form a disordered region. Residues N13–Y24 show a composition bias toward acidic residues. Over residues E25 to Q41 the composition is skewed to low complexity. The span at R46–L57 shows a compositional bias: polar residues.

Belongs to the SepF family. As to quaternary structure, homodimer. Interacts with FtsZ.

It is found in the cytoplasm. Cell division protein that is part of the divisome complex and is recruited early to the Z-ring. Probably stimulates Z-ring formation, perhaps through the cross-linking of FtsZ protofilaments. Its function overlaps with FtsA. The protein is Cell division protein SepF of Leuconostoc mesenteroides subsp. mesenteroides (strain ATCC 8293 / DSM 20343 / BCRC 11652 / CCM 1803 / JCM 6124 / NCDO 523 / NBRC 100496 / NCIMB 8023 / NCTC 12954 / NRRL B-1118 / 37Y).